Consider the following 512-residue polypeptide: Citrate synthase (512 aa).

Active-site residues include H288, H327, and D383. Residues 483–512 form a disordered region; sequence AIPKTATGSKSQLSASIEQSFGEKISPQSH. The span at 488-501 shows a compositional bias: polar residues; sequence ATGSKSQLSASIEQ.

This sequence belongs to the citrate synthase family.

The protein resides in the cytoplasm. The enzyme catalyses oxaloacetate + acetyl-CoA + H2O = citrate + CoA + H(+). The protein operates within carbohydrate metabolism; tricarboxylic acid cycle; isocitrate from oxaloacetate: step 1/2. This Dictyostelium discoideum (Social amoeba) protein is Citrate synthase (gltA).